Consider the following 173-residue polypeptide: Large ribosomal subunit protein uL10 (173 aa).

The protein belongs to the universal ribosomal protein uL10 family. As to quaternary structure, part of the ribosomal stalk of the 50S ribosomal subunit. The N-terminus interacts with L11 and the large rRNA to form the base of the stalk. The C-terminus forms an elongated spine to which L12 dimers bind in a sequential fashion forming a multimeric L10(L12)X complex.

In terms of biological role, forms part of the ribosomal stalk, playing a central role in the interaction of the ribosome with GTP-bound translation factors. This Cupriavidus necator (strain ATCC 17699 / DSM 428 / KCTC 22496 / NCIMB 10442 / H16 / Stanier 337) (Ralstonia eutropha) protein is Large ribosomal subunit protein uL10.